Consider the following 63-residue polypeptide: MGSFSMWHWLIVLVIVLLLFGRGKIPELMGDVAKGIKSFKKGMTDEDAPDTAKTVDHKADETK.

The chain crosses the membrane as a helical span at residues 1–21 (MGSFSMWHWLIVLVIVLLLFG). Positions 42–63 (GMTDEDAPDTAKTVDHKADETK) are disordered. Positions 53-63 (KTVDHKADETK) are enriched in basic and acidic residues.

The protein belongs to the TatA/E family. In terms of assembly, the Tat system comprises two distinct complexes: a TatABC complex, containing multiple copies of TatA, TatB and TatC subunits, and a separate TatA complex, containing only TatA subunits. Substrates initially bind to the TatABC complex, which probably triggers association of the separate TatA complex to form the active translocon.

Its subcellular location is the cell inner membrane. Part of the twin-arginine translocation (Tat) system that transports large folded proteins containing a characteristic twin-arginine motif in their signal peptide across membranes. TatA could form the protein-conducting channel of the Tat system. The polypeptide is Sec-independent protein translocase protein TatA (Rhizobium leguminosarum bv. trifolii (strain WSM2304)).